We begin with the raw amino-acid sequence, 320 residues long: Aspartate carbamoyltransferase catalytic subunit (320 aa).

Positions 57 and 58 each coordinate carbamoyl phosphate. Residue Lys85 participates in L-aspartate binding. Residues Arg107, His141, and Gln144 each coordinate carbamoyl phosphate. L-aspartate is bound by residues Arg174 and Arg228. Carbamoyl phosphate is bound by residues Gly269 and Pro270.

Belongs to the aspartate/ornithine carbamoyltransferase superfamily. ATCase family. In terms of assembly, heterododecamer (2C3:3R2) of six catalytic PyrB chains organized as two trimers (C3), and six regulatory PyrI chains organized as three dimers (R2).

It carries out the reaction carbamoyl phosphate + L-aspartate = N-carbamoyl-L-aspartate + phosphate + H(+). It participates in pyrimidine metabolism; UMP biosynthesis via de novo pathway; (S)-dihydroorotate from bicarbonate: step 2/3. Functionally, catalyzes the condensation of carbamoyl phosphate and aspartate to form carbamoyl aspartate and inorganic phosphate, the committed step in the de novo pyrimidine nucleotide biosynthesis pathway. This chain is Aspartate carbamoyltransferase catalytic subunit, found in Mycobacterium marinum (strain ATCC BAA-535 / M).